The primary structure comprises 226 residues: Thiopurine S-methyltransferase (226 aa).

S-adenosyl-L-methionine-binding residues include Trp-10, Leu-47, Glu-68, and Arg-130.

It belongs to the class I-like SAM-binding methyltransferase superfamily. TPMT family.

It localises to the cytoplasm. The enzyme catalyses S-adenosyl-L-methionine + a thiopurine = S-adenosyl-L-homocysteine + a thiopurine S-methylether.. The polypeptide is Thiopurine S-methyltransferase (Shewanella sediminis (strain HAW-EB3)).